A 3083-amino-acid chain; its full sequence is Laminin subunit alpha-1 (3083 aa).

Residues Met1–Ser24 form the signal peptide. Residue Gln25 is modified to Pyrrolidone carboxylic acid. Positions Gln25–Met276 constitute a Laminin N-terminal domain. 6 cysteine pairs are disulfide-bonded: Cys277–Cys286, Cys279–Cys297, Cys299–Cys308, Cys311–Cys331, Cys334–Cys343, and Cys336–Cys368. Laminin EGF-like domains follow at residues Cys277 to Glu333, Cys334 to Pro403, Cys404 to Pro460, and Cys461 to Glu509. An N-linked (GlcNAc...) asparagine glycan is attached at Asn370. 10 disulfide bridges follow: Cys371-Cys380, Cys383-Cys401, Cys404-Cys416, Cys406-Cys434, Cys436-Cys445, Cys448-Cys458, Cys461-Cys474, Cys463-Cys478, Cys480-Cys489, and Cys492-Cys507. A Laminin EGF-like 5; first part domain is found at Cys510–Cys519. Positions Thr523–His715 constitute a Laminin IV type A 1 domain. A glycan (N-linked (GlcNAc...) asparagine) is linked at Asn672. Residues Cys716–Pro748 form the Laminin EGF-like 5; second part domain. 32 disulfide bridges follow: Cys749/Cys758, Cys751/Cys764, Cys767/Cys776, Cys779/Cys795, Cys798/Cys813, Cys800/Cys823, Cys826/Cys835, Cys838/Cys853, Cys856/Cys870, Cys858/Cys877, Cys880/Cys889, Cys892/Cys906, Cys909/Cys921, Cys911/Cys928, Cys930/Cys939, Cys942/Cys955, Cys958/Cys970, Cys960/Cys976, Cys978/Cys987, Cys990/Cys1002, Cys1005/Cys1014, Cys1007/Cys1021, Cys1023/Cys1032, Cys1035/Cys1048, Cys1051/Cys1063, Cys1053/Cys1070, Cys1072/Cys1081, Cys1084/Cys1094, Cys1097/Cys1109, Cys1099/Cys1125, Cys1127/Cys1136, and Cys1139/Cys1154. Laminin EGF-like domains are found at residues Cys749–Pro797, Cys798–Pro855, Cys856–Ala908, Cys909–Pro957, Cys958–Pro1004, Cys1005–Ala1050, Cys1051–Pro1096, and Cys1097–Pro1156. The short motif at Arg1147–Asp1149 is the Cell attachment site element. The region spanning Cys1157 to Cys1166 is the Laminin EGF-like 14; first part domain. One can recognise a Laminin IV type A 2 domain in the interval Ile1177 to Leu1368. N-linked (GlcNAc...) asparagine glycosylation is present at Asn1344. The 41-residue stretch at Cys1369–Pro1409 folds into the Laminin EGF-like 14; second part domain. 12 disulfides stabilise this stretch: Cys1410/Cys1419, Cys1412/Cys1426, Cys1429/Cys1438, Cys1441/Cys1456, Cys1459/Cys1473, Cys1461/Cys1483, Cys1486/Cys1495, Cys1498/Cys1513, Cys1516/Cys1528, Cys1518/Cys1535, Cys1537/Cys1546, and Cys1549/Cys1560. 3 consecutive Laminin EGF-like domains span residues Cys1410–Pro1458, Cys1459–Thr1515, and Cys1516–Ser1562. Positions Asp1564–Ile2123 are domain II and I. Positions Ala1617–Lys1691 form a coiled coil. 6 N-linked (GlcNAc...) asparagine glycosylation sites follow: Asn1659, Asn1686, Asn1718, Asn1725, Asn1763, and Asn1811. A coiled-coil region spans residues Gln1723–Glu1809. Residues Lys1868–Asn1901 are a coiled coil. Asn1935, Asn2026, Asn2045, and Asn2066 each carry an N-linked (GlcNAc...) asparagine glycan. Laminin G-like domains follow at residues Lys2124–Cys2304, Asp2312–Cys2488, Ile2493–Cys2679, Ala2721–Cys2893, and Gln2898–Cys3078. Cys2278 and Cys2304 form a disulfide bridge. The N-linked (GlcNAc...) asparagine glycan is linked to Asn2355. 2 disulfide bridges follow: Cys2464–Cys2488 and Cys2652–Cys2679. Asn2834 carries an N-linked (GlcNAc...) asparagine glycan. Residues Cys2868 and Cys2893 are joined by a disulfide bond. A glycan (N-linked (GlcNAc...) asparagine) is linked at Asn2923. Cysteines 3047 and 3078 form a disulfide.

As to quaternary structure, laminin is a complex glycoprotein, consisting of three different polypeptide chains (alpha, beta, gamma), which are bound to each other by disulfide bonds into a cross-shaped molecule comprising one long and three short arms with globules at each end. Alpha-1 is a subunit of laminin-1 (laminin-111 or EHS laminin) and laminin-3 (laminin-121 or S-laminin). Post-translationally, tyrosine phosphorylated by PKDCC/VLK.

It localises to the secreted. Its subcellular location is the extracellular space. The protein localises to the extracellular matrix. The protein resides in the basement membrane. In terms of biological role, binding to cells via a high affinity receptor, laminin is thought to mediate the attachment, migration and organization of cells into tissues during embryonic development by interacting with other extracellular matrix components. The chain is Laminin subunit alpha-1 (Lama1) from Mus musculus (Mouse).